The chain runs to 152 residues: Deoxyuridine 5'-triphosphate nucleotidohydrolase (152 aa).

Residues 71-73 (RSG), Asn84, 88-90 (LID), and Met98 each bind substrate.

The protein belongs to the dUTPase family. Mg(2+) is required as a cofactor.

The enzyme catalyses dUTP + H2O = dUMP + diphosphate + H(+). It functions in the pathway pyrimidine metabolism; dUMP biosynthesis; dUMP from dCTP (dUTP route): step 2/2. This enzyme is involved in nucleotide metabolism: it produces dUMP, the immediate precursor of thymidine nucleotides and it decreases the intracellular concentration of dUTP so that uracil cannot be incorporated into DNA. This chain is Deoxyuridine 5'-triphosphate nucleotidohydrolase, found in Coxiella burnetii (strain Dugway 5J108-111).